Reading from the N-terminus, the 490-residue chain is Homoserine O-acetyltransferase (490 aa).

An AB hydrolase-1 domain is found at 47–353 (NAILVCHALT…SQFGHDAFLI (307 aa)). Catalysis depends on Ser152, which acts as the Nucleophile. Arg221 provides a ligand contact to substrate. Catalysis depends on residues Asp315 and His348. Asp349 is a binding site for substrate. 2 consecutive CBS domains span residues 375–432 (MNTQ…YTSL) and 436–490 (MSSQ…GRGP).

The protein belongs to the AB hydrolase superfamily. MetX family. As to quaternary structure, homodimer.

It localises to the cytoplasm. It catalyses the reaction L-homoserine + acetyl-CoA = O-acetyl-L-homoserine + CoA. The protein operates within amino-acid biosynthesis; L-methionine biosynthesis via de novo pathway; O-acetyl-L-homoserine from L-homoserine: step 1/1. Its function is as follows. Transfers an acetyl group from acetyl-CoA to L-homoserine, forming acetyl-L-homoserine. This chain is Homoserine O-acetyltransferase, found in Methanosphaerula palustris (strain ATCC BAA-1556 / DSM 19958 / E1-9c).